The chain runs to 1411 residues: DNA-directed RNA polymerase subunit beta' (1411 aa).

Residues cysteine 70, cysteine 72, cysteine 85, and cysteine 88 each coordinate Zn(2+). Residues aspartate 458, aspartate 460, and aspartate 462 each coordinate Mg(2+). 4 residues coordinate Zn(2+): cysteine 813, cysteine 887, cysteine 894, and cysteine 897. Residues 1391 to 1411 (AQAEVPELDGSSVTASDAAAD) are disordered.

The protein belongs to the RNA polymerase beta' chain family. The RNAP catalytic core consists of 2 alpha, 1 beta, 1 beta' and 1 omega subunit. When a sigma factor is associated with the core the holoenzyme is formed, which can initiate transcription. The cofactor is Mg(2+). Requires Zn(2+) as cofactor.

The catalysed reaction is RNA(n) + a ribonucleoside 5'-triphosphate = RNA(n+1) + diphosphate. DNA-dependent RNA polymerase catalyzes the transcription of DNA into RNA using the four ribonucleoside triphosphates as substrates. The polypeptide is DNA-directed RNA polymerase subunit beta' (Verminephrobacter eiseniae (strain EF01-2)).